A 338-amino-acid polypeptide reads, in one-letter code: UPF0324 membrane protein TauZ (338 aa).

10 helical membrane-spanning segments follow: residues 12-31 (IEAAFPGFAVSALVAATAQF), 36-55 (YGAPAMLLALLLGLALNFLA), 75-92 (LGVALLGARISAGMLAAL), 96-118 (AIALVAAGVVLTILFALAASRLV), 125-147 (ALLTGGSVAICGASAAMAIAAVL), 162-184 (LSVTVLSTVAMVLYPMLAGFFGF), 191-213 (VFLGGTIHDVAQVVGAGFSIGPE), 223-245 (LIRVSMLAPVVLCFSLAIRARGL), 258-280 (PGFVIGFLVLAALNSLGLVPAAV), and 315-337 (AIALILAETVFLAVFVTIGLHVL).

Belongs to the UPF0324 family.

The protein localises to the cell membrane. The sequence is that of UPF0324 membrane protein TauZ (tauZ) from Paracoccus denitrificans.